Here is a 319-residue protein sequence, read N- to C-terminus: MNFNINILGTGGTRPLHNRYLTSVLIEYHGESILFDCGEATQMSLRKQKISWQKIKMICITHLHADHITGLLGIVMLMAQSGDTRKEPLTIIGPIGIKKYLETNIELLRVHKNYQIIYKEIIINKTEPVLYEDKRKRIEYIKLKHSIDCIGYLFIEKDKPGKFDTQKAESLNIPKGPIRKKLQEGYEVILNGRKIVPSEILGEIKKGLKFAYITDTAYFEELSTYIQNFNLVIIESTFKDDLKEEAKKKLHLTAKLAAQITKKAKVYQTGLIHFSERYTLNKDLYELLNEAQQEYPNGNIFLAKDGMKLKANKDKFIIK.

Zn(2+) is bound by residues histidine 62, histidine 64, aspartate 66, histidine 67, histidine 145, aspartate 215, and histidine 273. Aspartate 66 serves as the catalytic Proton acceptor.

The protein belongs to the RNase Z family. In terms of assembly, homodimer. Requires Zn(2+) as cofactor.

The enzyme catalyses Endonucleolytic cleavage of RNA, removing extra 3' nucleotides from tRNA precursor, generating 3' termini of tRNAs. A 3'-hydroxy group is left at the tRNA terminus and a 5'-phosphoryl group is left at the trailer molecule.. Its function is as follows. Zinc phosphodiesterase, which displays some tRNA 3'-processing endonuclease activity. Probably involved in tRNA maturation, by removing a 3'-trailer from precursor tRNA. In Borrelia recurrentis (strain A1), this protein is Ribonuclease Z.